Here is a 129-residue protein sequence, read N- to C-terminus: Glycoprotein hormone alpha-2 (129 aa).

Positions 1-23 (MPMASPQTLVLYLLVLAVTEAWG) are cleaved as a signal peptide. 4 cysteine pairs are disulfide-bonded: C31–C89, C48–C103, C57–C119, and C61–C121. N-linked (GlcNAc...) asparagine glycans are attached at residues N37 and N81.

It belongs to the glycoprotein hormones subunit alpha family. In terms of assembly, heterodimer with GPHB5; this heterodimer interacts with thyroid-stimulating hormone receptor (TSHR), and hence stimulates cAMP production. Glycosylated. Found in a variety of tissues.

Its subcellular location is the secreted. Functionally, functions as a heterodimeric glycoprotein hormone with GPHB5 able to bind and activate the thyroid-stimulating hormone receptor (TSHR), leading to increased cAMP production. Plays a central role in controlling thyroid cell metabolism. This Homo sapiens (Human) protein is Glycoprotein hormone alpha-2 (GPHA2).